Here is a 643-residue protein sequence, read N- to C-terminus: Translation factor GUF1, mitochondrial (643 aa).

A mitochondrion-targeting transit peptide spans 1-18 (MLASQAIKRIFHRSWKPL). A tr-type G domain is found at 43 to 226 (ENYRNFSIVA…AIIDRIPPPT (184 aa)). GTP is bound by residues 52 to 59 (AHIDHGKS), 118 to 122 (DTPGH), and 172 to 175 (NKID).

Belongs to the TRAFAC class translation factor GTPase superfamily. Classic translation factor GTPase family. LepA subfamily.

The protein localises to the mitochondrion inner membrane. The enzyme catalyses GTP + H2O = GDP + phosphate + H(+). Its function is as follows. Promotes mitochondrial protein synthesis. May act as a fidelity factor of the translation reaction, by catalyzing a one-codon backward translocation of tRNAs on improperly translocated ribosomes. Binds to mitochondrial ribosomes in a GTP-dependent manner. This chain is Translation factor GUF1, mitochondrial, found in Zygosaccharomyces rouxii (strain ATCC 2623 / CBS 732 / NBRC 1130 / NCYC 568 / NRRL Y-229).